A 438-amino-acid chain; its full sequence is Carboxypeptidase A6 (438 aa).

A signal peptide spans 1-30; that stretch reads MNFLGNPRSHTAAFLPVCWLLLNILKPGHC. The propeptide at 31–129 is activation peptide; sequence HSYDNRYAGD…NSLQTQRNRR (99 aa). 2 N-linked (GlcNAc...) asparagine glycosylation sites follow: Asn-89 and Asn-153. The region spanning 138–433 is the Peptidase M14 domain; it reads VYHSLEDIQS…LAVKNITMHL (296 aa). Positions 197 and 200 each coordinate Zn(2+). Residues 197-200, Arg-255, and 272-273 contribute to the substrate site; these read HARE and NR. Cys-266 and Cys-289 are disulfide-bonded. His-325 serves as a coordination point for Zn(2+). Substrate is bound at residue 326–327; that stretch reads AY. The N-linked (GlcNAc...) asparagine glycan is linked to Asn-344. Tyr-377 contacts substrate. Glu-399 serves as the catalytic Proton donor/acceptor. Residue Asn-428 is glycosylated (N-linked (GlcNAc...) asparagine).

This sequence belongs to the peptidase M14 family. The cofactor is Zn(2+). In terms of tissue distribution, in brain, highly expressed in the olfactory bulb with lower levels in other regions including cerebral cortex, hippocampus, hypothalamus, striatum and medulla. Within the olfactory bulb, highest levels occur in the mitral and granular layers with lower levels in the internal and external plexiform layers. Moderate levels are found in the epididymis with low levels in colon and spleen. Not detected in adrenal, liver, lung, ovary or testis. At embryonic day 14.5, enriched in eye, ear, osteoblasts, stomach, skin, dorsal root ganglia and throughout the CNS.

It localises to the secreted. It is found in the extracellular space. The protein localises to the extracellular matrix. Functionally, may be involved in the proteolytic inactivation of enkephalins and neurotensin in some brain areas. May convert inactive angiotensin I into the biologically active angiotensin II. Releases a C-terminal amino acid, with preference for large hydrophobic C-terminal amino acids and shows only very weak activity toward small amino acids and histidine. This Mus musculus (Mouse) protein is Carboxypeptidase A6 (Cpa6).